The following is a 572-amino-acid chain: Asparagine--tRNA ligase, cytoplasmic 1 (572 aa).

Residue Ala2 is modified to N-acetylalanine. The segment at residues 53 to 131 is a DNA-binding region (OB); that stretch reads VRIGGWVKSG…QQIELNVVKV (79 aa). Residues 236–292 form the WHEP-TRS domain; sequence DVEAARLIVIERGNVVAELKAAKASKEAITAAVAELKIAKETFAHIDERSRLRPGLP.

It belongs to the class-II aminoacyl-tRNA synthetase family.

The protein localises to the cytoplasm. It localises to the cytosol. It catalyses the reaction tRNA(Asn) + L-asparagine + ATP = L-asparaginyl-tRNA(Asn) + AMP + diphosphate + H(+). This is Asparagine--tRNA ligase, cytoplasmic 1 from Arabidopsis thaliana (Mouse-ear cress).